The sequence spans 2217 residues: Protein irg-7 (2217 aa).

The N-terminal stretch at 1–16 is a signal peptide; that stretch reads MRNWVLIAALAVICLA. EGF-like domains are found at residues 370–405 and 864–896; these read SGST…FHCQ and TGTY…ESCE. Cystine bridges form between Cys379-Cys393, Cys395-Cys404, Cys868-Cys873, Cys886-Cys895, Cys1212-Cys1312, Cys1285-Cys1304, Cys1508-Cys1521, and Cys1523-Cys1532. The region spanning 1188 to 1313 is the C-type lectin domain; that stretch reads IGQYCIKFMA…CAEPRAFACQ (126 aa). In terms of domain architecture, EGF-like 3 spans 1499-1533; it reads TGSRCTVPICVNGGTRNPDEATCSCPDGYEGPNCQ. A VWFA domain is found at 2016–2202; the sequence is DVVFMIDGSQ…NNQIKTIQQL (187 aa).

The protein localises to the secreted. Its function is as follows. Plays a role in innate immunity, probably via the atf-7 pathway, to confer resistance to pathogenic bacteria. May also play a role in the regulation of longevity. The protein is Protein irg-7 of Caenorhabditis elegans.